The following is a 703-amino-acid chain: Solute carrier family 28 member 3 (703 aa).

Residues 1–19 show a composition bias toward basic and acidic residues; sequence MSRADPGKNSEPSESKMSL. Residues 1 to 93 are disordered; the sequence is MSRADPGKNS…DPEDDSEDEH (93 aa). Over 1-117 the chain is Cytoplasmic; the sequence is MSRADPGKNS…FCRKHRVVLR (117 aa). Residues 44–61 are compositionally biased toward polar residues; sequence QNTPGNSTVRNRVVQSGE. The segment covering 63–72 has biased composition (basic and acidic residues); the sequence is GHAKQDDRQI. The chain crosses the membrane as a helical span at residues 118-138; that stretch reads STIWAVLLTGFLALVIAACAI. The Extracellular portion of the chain corresponds to 139–143; it reads NFHRA. Residues 144–164 traverse the membrane as a helical segment; it reads LPLFVITLVTIFFVIWDHLMA. At 165–188 the chain is on the cytoplasmic side; the sequence is KYEQRIDDFLSPGRRLLDRHWFWL. A helical transmembrane segment spans residues 189 to 209; the sequence is KWVVWSSLILAIILWLSLDTA. At 210-212 the chain is on the extracellular side; the sequence is KLG. Residues 213–234 traverse the membrane as a helical segment; sequence QQNLVSFGGLIMYLILLFLFSK. At 235 to 242 the chain is on the cytoplasmic side; it reads HPTRVYWR. The chain crosses the membrane as a helical span at residues 243–262; the sequence is PVFWGIGLQFLLGLLILRTR. Over 263 to 299 the chain is Extracellular; the sequence is PGFVAFDWMGRQVQTFLGYTDTGARFVFGEKYTDHFF. A helical membrane pass occupies residues 300 to 320; it reads AFKILPIVVFFSTVMSMLYYL. The Cytoplasmic portion of the chain corresponds to 321–344; that stretch reads GLMQWIIRKVGWLMLVTMGSSPIE. The segment at residues 345-363 is an intramembrane region (helical); that stretch reads SVVAAGNIFIGQTESPLLV. The Cytoplasmic segment spans residues 364–376; that stretch reads QPYLPHVTKSELH. Residues 377–399 form a helical membrane-spanning segment; it reads TIMTAGFATIAGSVLGAYISFGV. Residues 400–401 are Extracellular-facing; it reads SS. The helical transmembrane segment at 402-423 threads the bilayer; the sequence is THLLTASVMSAPAALAVAKLFW. At 424-458 the chain is on the cytoplasmic side; the sequence is PETEKPKITLKSAMKMENGDSRNLLEAASQGASSS. The chain crosses the membrane as a helical span at residues 459-484; sequence IPLVANIAANLIAFLALLSFVNSALS. Over 485-522 the chain is Extracellular; the sequence is WFGSMFNYPELSFELICSYIFMPFSFMMGVDWQDSFMV. An intramembrane region (helical) is located at residues 523–542; the sequence is AKLIGYKTFFNEFVAYDHLS. The Extracellular portion of the chain corresponds to 543-581; that stretch reads KLINLRKAAGPKFVNGVQQYMSIRSETIATYALCGFANF. A helical transmembrane segment spans residues 582-592; it reads GSLGIVIGGLT. Residues 593–605 are Cytoplasmic-facing; that stretch reads SIAPSRKRDIASG. The chain crosses the membrane as a helical span at residues 606–628; the sequence is AMRALIAGTIACFMTACIAGILS. At 629–703 the chain is on the extracellular side; that stretch reads DTPVDINCHH…LNCNWIPNKL (75 aa).

Belongs to the concentrative nucleoside transporter (CNT) (TC 2.A.41) family. Homotrimer.

It is found in the cell membrane. The enzyme catalyses thymidine(out) + 2 Na(+)(out) = thymidine(in) + 2 Na(+)(in). It carries out the reaction cytidine(out) + 2 Na(+)(out) = cytidine(in) + 2 Na(+)(in). The catalysed reaction is uridine(out) + 2 Na(+)(out) = uridine(in) + 2 Na(+)(in). It catalyses the reaction adenosine(out) + 2 Na(+)(out) = adenosine(in) + 2 Na(+)(in). The enzyme catalyses guanosine(out) + 2 Na(+)(out) = guanosine(in) + 2 Na(+)(in). It carries out the reaction inosine(out) + 2 Na(+)(out) = inosine(in) + 2 Na(+)(in). Functionally, sodium-dependent, pyrimidine- and purine-selective. Involved in the homeostasis of endogenous nucleosides. Exhibits the transport characteristics of the nucleoside transport system cib or N3 subtype (N3/cib) (with marked transport of both thymidine and inosine). Employs a 2:1 sodium/nucleoside ratio. Also able to transport gemcitabine, 3'-azido-3'-deoxythymidine (AZT), ribavirin and 3-deazauridine. The chain is Solute carrier family 28 member 3 (Slc28a3) from Mus musculus (Mouse).